The following is a 612-amino-acid chain: Dihydroxy-acid dehydratase (612 aa).

Residue Asp-81 coordinates Mg(2+). Cys-122 is a [2Fe-2S] cluster binding site. Residues Asp-123 and Lys-124 each contribute to the Mg(2+) site. Lys-124 bears the N6-carboxylysine mark. Residue Cys-195 participates in [2Fe-2S] cluster binding. Glu-491 lines the Mg(2+) pocket. Ser-517 (proton acceptor) is an active-site residue.

It belongs to the IlvD/Edd family. As to quaternary structure, homodimer. [2Fe-2S] cluster serves as cofactor. The cofactor is Mg(2+).

It catalyses the reaction (2R)-2,3-dihydroxy-3-methylbutanoate = 3-methyl-2-oxobutanoate + H2O. The enzyme catalyses (2R,3R)-2,3-dihydroxy-3-methylpentanoate = (S)-3-methyl-2-oxopentanoate + H2O. It functions in the pathway amino-acid biosynthesis; L-isoleucine biosynthesis; L-isoleucine from 2-oxobutanoate: step 3/4. The protein operates within amino-acid biosynthesis; L-valine biosynthesis; L-valine from pyruvate: step 3/4. Functions in the biosynthesis of branched-chain amino acids. Catalyzes the dehydration of (2R,3R)-2,3-dihydroxy-3-methylpentanoate (2,3-dihydroxy-3-methylvalerate) into 2-oxo-3-methylpentanoate (2-oxo-3-methylvalerate) and of (2R)-2,3-dihydroxy-3-methylbutanoate (2,3-dihydroxyisovalerate) into 2-oxo-3-methylbutanoate (2-oxoisovalerate), the penultimate precursor to L-isoleucine and L-valine, respectively. This Rhizobium rhizogenes (strain K84 / ATCC BAA-868) (Agrobacterium radiobacter) protein is Dihydroxy-acid dehydratase.